We begin with the raw amino-acid sequence, 82 residues long: UPF0291 protein LJ_1507 (82 aa).

The interval 61 to 82 is disordered; it reads DGKEVTSEKAKEAQRRKGLRKD.

The protein belongs to the UPF0291 family.

The protein localises to the cytoplasm. In Lactobacillus johnsonii (strain CNCM I-12250 / La1 / NCC 533), this protein is UPF0291 protein LJ_1507.